Here is a 485-residue protein sequence, read N- to C-terminus: MKRLRPSDKFFELLGYKPHHVQLAIHRSTAKRRVACLGRQSGKSEAASVEAVFELFARPGSQGWIIAPTYDQAEIIFGRVVEKVERLAEVFPATEVQLQRRRLRLLVHHYDRPVNAPGAKRVATSEFRGKSADRPDNLRGATLDFVILDEAAMIPFSVWSEAIEPTLSVRDGWALIISTPKGLNWFYEFFLMGWRGGLKEGIPNSGVNQTHPDFESFHAASWDVWPERREWYMERRLYIPDLEFRQEYGAEFVSHSNSVFSGLDMLILLPYERRGTRLVVEDYRPDHIYCIGADFGKNQDYSVFSVLDLDTGAIVCLERMNGATWSDQVARLKALSEDYGHAYVVADTWGVGDAIAEELDAQGINYTPLPVKSSSVKEQLISNLALLMEKGQVAVPNDKTILDELRNFRYYRTASGNQVMRAYGRGHDDIVMSLALAYSQYEGKDGYKFELAEERPSKLKHEESVMSLVEDDFTDLELANRAFSA.

Residues Lys17 to Gln22, Gln40 to Glu45, and Arg79 contribute to the ADP site. The tract at residues Gln22 to Gly197 is ATPase activity. ATP-binding residues include Gln97 and Gln99. The short motif at Ser125 to Ser131 is the Walker A motif element. The short motif at Phe145–Glu150 is the Walker B motif element. Glu150 (for ATPase activity) is an active-site residue. Residues Ser256–Tyr438 form a nuclease region. Mg(2+) is bound by residues Asp294, Asp347, and Asp429.

It belongs to the Tequatrovirus large terminase family. Interacts with the terminase small subunit; the active complex is composed of a pentamer of terminase large subunits and a dodecamer of terminase small subunits. Interacts with the portal protein. The cofactor is Mg(2+).

Its function is as follows. The terminase large subunit acts as an ATP driven molecular motor necessary for viral DNA translocation into empty capsids and as an endonuclease that cuts the viral genome to initiate and to end a packaging reaction The terminase lies at a unique vertex of the procapsid and is composed of two subunits, a small terminase subunit involved in viral DNA recognition (packaging sequence), and a large terminase subunit possessing endonucleolytic and ATPase activities. Both terminase subunits heterooligomerize and are docked on the portal protein to form the packaging machine. The terminase large subunit exhibits endonuclease activity and cleaves the viral genome concatemer. Once the capsid is packaged with the DNA, the terminase complex is substituted by the tail. This Thermus thermophilus (Thermus thermophilus phage P23-45) protein is Terminase, large subunit.